The chain runs to 1370 residues: Insulin-like growth factor 1 receptor (1370 aa).

Residues 1 to 30 (MKSGSGGGSPTSLWGLVFLSAALSLWPTSG) form the signal peptide. Cysteines 33 and 52 form a disulfide. Residues asparagine 51, asparagine 102, and asparagine 135 are each glycosylated (N-linked (GlcNAc...) asparagine). 13 disulfide bridges follow: cysteine 150–cysteine 178, cysteine 182–cysteine 205, cysteine 192–cysteine 211, cysteine 215–cysteine 224, cysteine 219–cysteine 230, cysteine 231–cysteine 239, cysteine 235–cysteine 248, cysteine 251–cysteine 260, cysteine 264–cysteine 276, cysteine 282–cysteine 303, cysteine 307–cysteine 321, cysteine 324–cysteine 328, and cysteine 332–cysteine 354. Residue asparagine 245 is glycosylated (N-linked (GlcNAc...) asparagine). Asparagine 314 carries N-linked (GlcNAc...) asparagine glycosylation. Residues asparagine 418 and asparagine 439 are each glycosylated (N-linked (GlcNAc...) asparagine). A disulfide bridge links cysteine 456 with cysteine 489. Fibronectin type-III domains lie at 490–610 (ESDV…TNAS) and 611–709 (VPSI…TEAE). Residues asparagine 535, asparagine 608, asparagine 623, asparagine 641, asparagine 748, asparagine 757, asparagine 765, asparagine 901, and asparagine 914 are each glycosylated (N-linked (GlcNAc...) asparagine). The Extracellular portion of the chain corresponds to 742–936 (DVLQVANTTM…AKTTYENFMH (195 aa)). The Fibronectin type-III 3 domain occupies 835 to 928 (IPGPVTWEPR…DPVFFYVPAK (94 aa)). A helical membrane pass occupies residues 937 to 960 (LIIALPVAILLIVGGLVIMLYVFH). Residues 961–1370 (RKRNNSRLGN…ALPLPQSSTC (410 aa)) are Cytoplasmic-facing. The short motif at 978-981 (NPEY) is the IRS1- and SHC1-binding element. Tyrosine 981 carries the phosphotyrosine modification. The 276-residue stretch at 1000–1275 (ITMNRELGQG…SIKDEMEPSF (276 aa)) folds into the Protein kinase domain. ATP-binding positions include 1006–1014 (LGQGSFGMV) and lysine 1034. Aspartate 1136 serves as the catalytic Proton acceptor. 3 positions are modified to phosphotyrosine; by autocatalysis: tyrosine 1162, tyrosine 1166, and tyrosine 1167. Residues lysine 1169 and lysine 1172 each participate in a glycyl lysine isopeptide (Lys-Gly) (interchain with G-Cter in ubiquitin) cross-link. Position 1279 is a phosphoserine; by GSK3-beta (serine 1279). The residue at position 1283 (serine 1283) is a Phosphoserine. Residues 1304 to 1370 (NMESVPLDPS…ALPLPQSSTC (67 aa)) form a disordered region. A compositionally biased stretch (low complexity) spans 1305-1321 (MESVPLDPSASSASLPL). Residues 1322–1331 (PERHSGHKAE) are compositionally biased toward basic and acidic residues.

The protein belongs to the protein kinase superfamily. Tyr protein kinase family. Insulin receptor subfamily. As to quaternary structure, tetramer of 2 alpha and 2 beta chains linked by disulfide bonds. The alpha chains contribute to the formation of the ligand-binding domain, while the beta chain carries the kinase domain. Interacts with PIK3R1 and with the PTB/PID domains of IRS1 and SHC1 in vitro when autophosphorylated on tyrosine residues. Forms a hybrid receptor with INSR, the hybrid is a tetramer consisting of 1 alpha chain and 1 beta chain of INSR and 1 alpha chain and 1 beta chain of IGF1R. Interacts with ARRB1 and ARRB2. Interacts with GRB10. Interacts with RACK1. Interacts with SOCS1, SOCS2 and SOCS3. Interacts with 14-3-3 proteins. Interacts with NMD2. Interacts with MAP3K5. Interacts with STAT3. Found in a ternary complex with IGF1 and ITGAV:ITGB3 or ITGA6:ITGB4. Interacts (nascent precursor form) with ZFAND2B. In terms of processing, autophosphorylated on tyrosine residues in response to ligand binding. Autophosphorylation occurs in trans, i.e. one subunit of the dimeric receptor phosphorylates tyrosine residues on the other subunit. Autophosphorylation occurs in a sequential manner; Tyr-1166 is predominantly phosphorylated first, followed by phosphorylation of Tyr-1162 and Tyr-1167. While every single phosphorylation increases kinase activity, all three tyrosine residues in the kinase activation loop (Tyr-1162, Tyr-1166 and Tyr-1167) have to be phosphorylated for optimal activity. Can be autophosphorylated at additional tyrosine residues (in vitro). Autophosphorylated is followed by phosphorylation of juxtamembrane tyrosines and C-terminal serines. May also be phosphorylated at Tyr-1162 and Tyr-1167 by mTORC2. Phosphorylation of Tyr-981 is required for IRS1- and SHC1-binding. Phosphorylation of Ser-1279 by GSK-3beta restrains kinase activity and promotes cell surface expression, it requires a priming phosphorylation at Ser-1283. Dephosphorylated by PTPN1. Polyubiquitinated at Lys-1169 and Lys-1172 through both 'Lys-48' and 'Lys-29' linkages, promoting receptor endocytosis and subsequent degradation by the proteasome. Ubiquitination is facilitated by pre-existing phosphorylation. Post-translationally, sumoylated with SUMO1. In terms of processing, controlled by regulated intramembrane proteolysis (RIP). Undergoes metalloprotease-dependent constitutive ectodomain shedding to produce a membrane-anchored 52 kDa C-Terminal fragment which is further processed by presenilin gamma-secretase to yield an intracellular 50 kDa fragment.

It localises to the cell membrane. It carries out the reaction L-tyrosyl-[protein] + ATP = O-phospho-L-tyrosyl-[protein] + ADP + H(+). Activated by autophosphorylation at Tyr-1162, Tyr-1166 and Tyr-1167 on the kinase activation loop; phosphorylation at all three tyrosine residues is required for optimal kinase activity. Inhibited by MSC1609119A-1, BMS-754807, PQIP, benzimidazole pyridinone, isoquinolinedione, bis-azaindole, 3-cyanoquinoline, 2,4-bis-arylamino-1,3-pyrimidine, pyrrolopyrimidine, pyrrole-5-carboxaldehyde, picropodophyllin (PPP), tyrphostin derivatives. While most inhibitors bind to the ATP binding pocket, MSC1609119A-1 functions as allosteric inhibitor and binds close to the DFG motif and the activation loop. Dephosphorylated by PTPN1. In terms of biological role, receptor tyrosine kinase which mediates actions of insulin-like growth factor 1 (IGF1). Binds IGF1 with high affinity and IGF2 and insulin (INS) with a lower affinity. The activated IGF1R is involved in cell growth and survival control. IGF1R is crucial for tumor transformation and survival of malignant cell. Ligand binding activates the receptor kinase, leading to receptor autophosphorylation, and tyrosines phosphorylation of multiple substrates, that function as signaling adapter proteins including, the insulin-receptor substrates (IRS1/2), Shc and 14-3-3 proteins. Phosphorylation of IRSs proteins lead to the activation of two main signaling pathways: the PI3K-AKT/PKB pathway and the Ras-MAPK pathway. The result of activating the MAPK pathway is increased cellular proliferation, whereas activating the PI3K pathway inhibits apoptosis and stimulates protein synthesis. Phosphorylated IRS1 can activate the 85 kDa regulatory subunit of PI3K (PIK3R1), leading to activation of several downstream substrates, including protein AKT/PKB. AKT phosphorylation, in turn, enhances protein synthesis through mTOR activation and triggers the antiapoptotic effects of IGFIR through phosphorylation and inactivation of BAD. In parallel to PI3K-driven signaling, recruitment of Grb2/SOS by phosphorylated IRS1 or Shc leads to recruitment of Ras and activation of the ras-MAPK pathway. In addition to these two main signaling pathways IGF1R signals also through the Janus kinase/signal transducer and activator of transcription pathway (JAK/STAT). Phosphorylation of JAK proteins can lead to phosphorylation/activation of signal transducers and activators of transcription (STAT) proteins. In particular activation of STAT3, may be essential for the transforming activity of IGF1R. The JAK/STAT pathway activates gene transcription and may be responsible for the transforming activity. JNK kinases can also be activated by the IGF1R. IGF1 exerts inhibiting activities on JNK activation via phosphorylation and inhibition of MAP3K5/ASK1, which is able to directly associate with the IGF1R. When present in a hybrid receptor with INSR, binds IGF1. This chain is Insulin-like growth factor 1 receptor (Igf1r), found in Rattus norvegicus (Rat).